The following is a 422-amino-acid chain: Serine--tRNA ligase (422 aa).

230-232 (TAE) serves as a coordination point for L-serine. 261–263 (RNE) provides a ligand contact to ATP. Residue glutamate 284 coordinates L-serine. 347–350 (EVSS) contacts ATP. L-serine is bound at residue serine 383.

Belongs to the class-II aminoacyl-tRNA synthetase family. Type-1 seryl-tRNA synthetase subfamily. As to quaternary structure, homodimer. The tRNA molecule binds across the dimer.

The protein localises to the cytoplasm. It catalyses the reaction tRNA(Ser) + L-serine + ATP = L-seryl-tRNA(Ser) + AMP + diphosphate + H(+). It carries out the reaction tRNA(Sec) + L-serine + ATP = L-seryl-tRNA(Sec) + AMP + diphosphate + H(+). It participates in aminoacyl-tRNA biosynthesis; selenocysteinyl-tRNA(Sec) biosynthesis; L-seryl-tRNA(Sec) from L-serine and tRNA(Sec): step 1/1. Catalyzes the attachment of serine to tRNA(Ser). Is also able to aminoacylate tRNA(Sec) with serine, to form the misacylated tRNA L-seryl-tRNA(Sec), which will be further converted into selenocysteinyl-tRNA(Sec). This Herpetosiphon aurantiacus (strain ATCC 23779 / DSM 785 / 114-95) protein is Serine--tRNA ligase.